Here is a 524-residue protein sequence, read N- to C-terminus: Probable aminopeptidase NPEPL1 (524 aa).

The Zn(2+) site is built by K260 and D265. K272 is an active-site residue. The Zn(2+) site is built by D283, D342, and E344. R346 is a catalytic residue.

The protein belongs to the peptidase M17 family. Zn(2+) serves as cofactor. Mn(2+) is required as a cofactor.

Probably catalyzes the removal of unsubstituted N-terminal amino acids from various peptides. The polypeptide is Probable aminopeptidase NPEPL1 (Npepl1) (Mus musculus (Mouse)).